We begin with the raw amino-acid sequence, 368 residues long: RING finger protein 32 (368 aa).

Residues 45–82 (RKKEKKSKSLKRDATAIIDTGLRKSTEGPNMEDPEKEY) form a disordered region. The RING-type 1; atypical zinc finger occupies 129 to 171 (CPICKEEFELHPQVLLSCSHVFHRACLQAFEKFTNKKTCPLCR). One can recognise an IQ domain in the interval 188-217 (RVKCATRIQAYWRGYIVRKWYRNLRKIIPP). The RING-type 2; atypical zinc finger occupies 295–358 (CSICLTPLSF…APFHVCPLCR (64 aa)).

It localises to the cytoplasm. In terms of biological role, may play a role in sperm formation. The protein is RING finger protein 32 (Rnf32) of Mus musculus (Mouse).